The following is a 179-amino-acid chain: Repressor of phase 1 flagellin gene (179 aa).

Its function is as follows. Transcriptional repressor of the FliC phase-1 flagellin. The polypeptide is Repressor of phase 1 flagellin gene (fljA) (Salmonella abony).